The sequence spans 101 residues: Olivetolic acid cyclase (101 aa).

Residues 3-97 (VKHLIVLKFK…FWEKLLIFDY (95 aa)) enclose the Stress-response A/B barrel domain. His-5 contacts 3,5,7-trioxododecanoyl-CoA. The Mg(2+) site is built by Val-31, Ile-34, and Met-37. Residue Tyr-72 participates in 3,5,7-trioxododecanoyl-CoA binding. Residues Tyr-72 and His-75 each act as acid/base catalyst in the active site.

Homodimer. Expressed in glandular trichomes and at lower levels in female flowers.

It localises to the cytoplasm. It catalyses the reaction 3,5,7-trioxododecanoyl-CoA = olivetolate + CoA + H(+). It functions in the pathway secondary metabolite biosynthesis; terpenoid biosynthesis. Involved in the biosynthesis of cannabinoids-related terpenophenolic natural products, which have pharmacological activity. Polyketide cyclase which functions in concert with OLS/TKS to form olivetolic acid. Has no intrinsic polyketide synthase activity and requires the presence of OLS to produce olivetolic acid. The sequence is that of Olivetolic acid cyclase from Cannabis sativa (Hemp).